Consider the following 1388-residue polypeptide: DNA-directed RNA polymerase subunit beta'' (1388 aa).

Zn(2+) contacts are provided by C224, C294, C301, and C304.

This sequence belongs to the RNA polymerase beta' chain family. RpoC2 subfamily. In terms of assembly, in plastids the minimal PEP RNA polymerase catalytic core is composed of four subunits: alpha, beta, beta', and beta''. When a (nuclear-encoded) sigma factor is associated with the core the holoenzyme is formed, which can initiate transcription. Requires Zn(2+) as cofactor.

It localises to the plastid. It is found in the chloroplast. The catalysed reaction is RNA(n) + a ribonucleoside 5'-triphosphate = RNA(n+1) + diphosphate. Its function is as follows. DNA-dependent RNA polymerase catalyzes the transcription of DNA into RNA using the four ribonucleoside triphosphates as substrates. The sequence is that of DNA-directed RNA polymerase subunit beta'' from Phalaenopsis aphrodite subsp. formosana (Moth orchid).